The chain runs to 364 residues: Chorismate synthase (364 aa).

Arginine 47 serves as a coordination point for NADP(+). FMN is bound by residues 125 to 127, glycine 285, 300 to 304, and arginine 327; these read RFS and KPTPS.

It belongs to the chorismate synthase family. In terms of assembly, homotetramer. It depends on FMNH2 as a cofactor.

The catalysed reaction is 5-O-(1-carboxyvinyl)-3-phosphoshikimate = chorismate + phosphate. The protein operates within metabolic intermediate biosynthesis; chorismate biosynthesis; chorismate from D-erythrose 4-phosphate and phosphoenolpyruvate: step 7/7. Functionally, catalyzes the anti-1,4-elimination of the C-3 phosphate and the C-6 proR hydrogen from 5-enolpyruvylshikimate-3-phosphate (EPSP) to yield chorismate, which is the branch point compound that serves as the starting substrate for the three terminal pathways of aromatic amino acid biosynthesis. This reaction introduces a second double bond into the aromatic ring system. The polypeptide is Chorismate synthase (Dehalococcoides mccartyi (strain ATCC BAA-2266 / KCTC 15142 / 195) (Dehalococcoides ethenogenes (strain 195))).